We begin with the raw amino-acid sequence, 295 residues long: Protoheme IX farnesyltransferase (295 aa).

Helical transmembrane passes span 30-50, 51-71, 93-115, 119-136, 148-168, 175-195, 219-239, 244-264, and 275-295; these read LVVL…HPLI, AVIS…INMW, ISRS…IMMI, YISG…IYVY, IVIG…SVTG, LVLF…LSLL, IHIL…GLFL, LYEI…FQVF, and MFTY…LSSF.

It belongs to the UbiA prenyltransferase family. Protoheme IX farnesyltransferase subfamily.

Its subcellular location is the cell inner membrane. The enzyme catalyses heme b + (2E,6E)-farnesyl diphosphate + H2O = Fe(II)-heme o + diphosphate. Its pathway is porphyrin-containing compound metabolism; heme O biosynthesis; heme O from protoheme: step 1/1. Its function is as follows. Converts heme B (protoheme IX) to heme O by substitution of the vinyl group on carbon 2 of heme B porphyrin ring with a hydroxyethyl farnesyl side group. The sequence is that of Protoheme IX farnesyltransferase from Ehrlichia ruminantium (strain Welgevonden).